The sequence spans 345 residues: Protein-arginine kinase (345 aa).

The 231-residue stretch at 15–245 (LVISSRIRLA…LQIINQEIIS (231 aa)) folds into the Phosphagen kinase C-terminal domain. ATP contacts are provided by residues 18–22 (SSRIR), His82, Arg116, 167–171 (RASVM), and 198–203 (RGLYGE). An RDXXRA motif of the pArg binding pocket involved in allosteric regulation motif is present at residues 328–333 (RDFNRA).

Belongs to the ATP:guanido phosphotransferase family.

It carries out the reaction L-arginyl-[protein] + ATP = N(omega)-phospho-L-arginyl-[protein] + ADP + H(+). Appears to be allosterically activated by the binding of pArg-containing polypeptides to the pArg-binding pocket localized in the C-terminal domain of McsB. In terms of biological role, catalyzes the specific phosphorylation of arginine residues in proteins. The protein is Protein-arginine kinase of Clostridium kluyveri (strain NBRC 12016).